Consider the following 390-residue polypeptide: 1-acyl-sn-glycerol-3-phosphate acyltransferase 2 (390 aa).

The helical transmembrane segment at 2–22 (AMAAAVIVPLGILFFISGLVV) threads the bilayer. The HXXXXD motif signature appears at 91–96 (HRSDID). 2 consecutive transmembrane segments (helical) span residues 305-325 (LAVVVSWACLLTLGAMKFLHW) and 333-353 (KGIALSAFGLGIITLCMQILI). The segment at 358–390 (SERSTPAKVAPAKPKDNHQSGPSSQTEVEEKQK) is disordered.

The protein belongs to the 1-acyl-sn-glycerol-3-phosphate acyltransferase family.

The protein localises to the endoplasmic reticulum membrane. The catalysed reaction is a 1-acyl-sn-glycero-3-phosphate + an acyl-CoA = a 1,2-diacyl-sn-glycero-3-phosphate + CoA. It participates in phospholipid metabolism; CDP-diacylglycerol biosynthesis; CDP-diacylglycerol from sn-glycerol 3-phosphate: step 2/3. Functionally, converts lysophosphatidic acid (LPA) into phosphatidic acid by incorporating acyl moiety at the 2 position. The polypeptide is 1-acyl-sn-glycerol-3-phosphate acyltransferase 2 (LPAT2) (Brassica napus (Rape)).